The primary structure comprises 414 residues: Histidine--tRNA ligase (414 aa).

Belongs to the class-II aminoacyl-tRNA synthetase family. As to quaternary structure, homodimer.

Its subcellular location is the cytoplasm. The catalysed reaction is tRNA(His) + L-histidine + ATP = L-histidyl-tRNA(His) + AMP + diphosphate + H(+). The chain is Histidine--tRNA ligase from Rickettsia conorii (strain ATCC VR-613 / Malish 7).